A 503-amino-acid chain; its full sequence is UDP-N-acetylmuramoyl-L-alanyl-D-glutamate--2,6-diaminopimelate ligase (503 aa).

S32 contacts UDP-N-acetyl-alpha-D-muramoyl-L-alanyl-D-glutamate. Residue 117–123 (GTNGKTT) coordinates ATP. Residues 159 to 160 (TT), S186, Q192, and R194 contribute to the UDP-N-acetyl-alpha-D-muramoyl-L-alanyl-D-glutamate site. K226 is subject to N6-carboxylysine. Meso-2,6-diaminopimelate is bound by residues R396, 420-423 (DNPR), G471, and E475. The short motif at 420-423 (DNPR) is the Meso-diaminopimelate recognition motif element.

Belongs to the MurCDEF family. MurE subfamily. It depends on Mg(2+) as a cofactor. Post-translationally, carboxylation is probably crucial for Mg(2+) binding and, consequently, for the gamma-phosphate positioning of ATP.

The protein localises to the cytoplasm. The catalysed reaction is UDP-N-acetyl-alpha-D-muramoyl-L-alanyl-D-glutamate + meso-2,6-diaminopimelate + ATP = UDP-N-acetyl-alpha-D-muramoyl-L-alanyl-gamma-D-glutamyl-meso-2,6-diaminopimelate + ADP + phosphate + H(+). It participates in cell wall biogenesis; peptidoglycan biosynthesis. Functionally, catalyzes the addition of meso-diaminopimelic acid to the nucleotide precursor UDP-N-acetylmuramoyl-L-alanyl-D-glutamate (UMAG) in the biosynthesis of bacterial cell-wall peptidoglycan. In Prochlorococcus marinus (strain SARG / CCMP1375 / SS120), this protein is UDP-N-acetylmuramoyl-L-alanyl-D-glutamate--2,6-diaminopimelate ligase.